A 131-amino-acid chain; its full sequence is Large ribosomal subunit protein bL17 (131 aa).

The protein belongs to the bacterial ribosomal protein bL17 family. Part of the 50S ribosomal subunit. Contacts protein L32.

This chain is Large ribosomal subunit protein bL17, found in Methylacidiphilum infernorum (isolate V4) (Methylokorus infernorum (strain V4)).